The primary structure comprises 117 residues: Ribosome-binding factor A (117 aa).

The protein belongs to the RbfA family. In terms of assembly, monomer. Binds 30S ribosomal subunits, but not 50S ribosomal subunits or 70S ribosomes.

It localises to the cytoplasm. Its function is as follows. One of several proteins that assist in the late maturation steps of the functional core of the 30S ribosomal subunit. Associates with free 30S ribosomal subunits (but not with 30S subunits that are part of 70S ribosomes or polysomes). Required for efficient processing of 16S rRNA. May interact with the 5'-terminal helix region of 16S rRNA. This chain is Ribosome-binding factor A, found in Petrotoga mobilis (strain DSM 10674 / SJ95).